The following is a 315-amino-acid chain: Hydrogenase-4 component C (315 aa).

The Periplasmic segment spans residues 1–10; the sequence is MRQTLCDGYL. Residues 11–31 traverse the membrane as a helical segment; it reads VIFALAQAVILLMLTPLFTGI. The Cytoplasmic portion of the chain corresponds to 32-73; the sequence is SRQIRARMHSRRGPGIWQDYRDIHKLFKRQEVAPTSSGLMFR. A helical membrane pass occupies residues 74–94; that stretch reads LMPWVLISSMLVLAMALPLFI. The Periplasmic portion of the chain corresponds to 95 to 98; it reads TVSP. A helical membrane pass occupies residues 99–119; it reads FAGGGDLITLIYLLALFRFFF. At 120–140 the chain is on the cytoplasmic side; the sequence is ALSGLDTGSPFAGVGASRELT. Residues 141-161 form a helical membrane-spanning segment; sequence LGILVEPMLILSLLVLALIAG. The Periplasmic segment spans residues 162 to 181; that stretch reads STHIEMISNTLAMGWNSPLT. A helical membrane pass occupies residues 182 to 202; it reads TVLALLACGFACFIEMGKIPF. The Cytoplasmic portion of the chain corresponds to 203-228; the sequence is DVAEAEQELQEGPLTEYSGAGLALAK. Residues 229 to 249 form a helical membrane-spanning segment; it reads WGLGLKQVVMASLFVALFLPF. The Periplasmic segment spans residues 250–256; that stretch reads GRAQELS. Residues 257 to 277 traverse the membrane as a helical segment; the sequence is LACLLTSLVVTLLKVLLIFVL. Topologically, residues 278–289 are cytoplasmic; it reads ASIAENTLARGR. A helical membrane pass occupies residues 290–310; sequence FLLIHHVTWLGFSLAALAWVF. The Periplasmic portion of the chain corresponds to 311 to 315; it reads WLTGL.

It belongs to the complex I subunit 1 family.

It localises to the cell inner membrane. In terms of biological role, possible component of hydrogenase 4. The protein is Hydrogenase-4 component C of Escherichia coli (strain K12).